A 24-amino-acid polypeptide reads, in one-letter code: Chlorate reductase subunit beta (24 aa).

As to quaternary structure, heterotrimer of alpha, beta and gamma subunits. [3Fe-4S] cluster serves as cofactor. [4Fe-4S] cluster is required as a cofactor.

The protein localises to the cytoplasm. In terms of biological role, electron transfer subunit of the chlorate reductase. This Stutzerimonas chloritidismutans (Pseudomonas chloritidismutans) protein is Chlorate reductase subunit beta.